Consider the following 256-residue polypeptide: Ferritin-3, chloroplastic (256 aa).

The N-terminal 54 residues, 1-54, are a transit peptide targeting the chloroplast; it reads MALSCSKVLTFSLSSVVGGDDAKKKLSLCSSSSLSASVNGGGSRNMRVCAAASN. The extension peptide (EP) stretch occupies residues 55–87; sequence APAPLTGVIFEPFQELKKDYLAVPIAPNVSLSR. One can recognise a Ferritin-like diiron domain in the interval 88 to 241; sequence QNYSDEAEAA…EYVTQLRLVG (154 aa). Residues glutamate 105, glutamate 140, histidine 143, glutamate 189, and glutamine 223 each coordinate Fe cation.

It belongs to the ferritin family. Oligomer of 24 subunits. There are two types of subunits: L (light) chain and H (heavy) chain. The major chain can be light or heavy, depending on the species and tissue type. The functional molecule forms a roughly spherical shell with a diameter of 12 nm and contains a central cavity into which the insoluble mineral iron core is deposited.

It is found in the plastid. The protein localises to the chloroplast. It catalyses the reaction 4 Fe(2+) + O2 + 4 H(+) = 4 Fe(3+) + 2 H2O. Functionally, stores iron in a soluble, non-toxic, readily available form. Important for iron homeostasis. Has ferroxidase activity. Iron is taken up in the ferrous form and deposited as ferric hydroxides after oxidation. The protein is Ferritin-3, chloroplastic of Vigna unguiculata (Cowpea).